The primary structure comprises 177 residues: 3-isopropylmalate dehydratase small subunit 1 (177 aa).

The interval G157–E177 is disordered. The segment covering E162–E177 has biased composition (low complexity).

Belongs to the LeuD family. LeuD type 2 subfamily. Heterodimer of LeuC and LeuD.

The enzyme catalyses (2R,3S)-3-isopropylmalate = (2S)-2-isopropylmalate. It functions in the pathway amino-acid biosynthesis; L-leucine biosynthesis; L-leucine from 3-methyl-2-oxobutanoate: step 2/4. Functionally, catalyzes the isomerization between 2-isopropylmalate and 3-isopropylmalate, via the formation of 2-isopropylmaleate. The chain is 3-isopropylmalate dehydratase small subunit 1 (leuD1) from Deinococcus radiodurans (strain ATCC 13939 / DSM 20539 / JCM 16871 / CCUG 27074 / LMG 4051 / NBRC 15346 / NCIMB 9279 / VKM B-1422 / R1).